Consider the following 324-residue polypeptide: Quinolinate synthase 2 (324 aa).

Positions 48 and 66 each coordinate iminosuccinate. Cys111 lines the [4Fe-4S] cluster pocket. Iminosuccinate contacts are provided by residues 137–139 (YVN) and Ser154. Cys196 contributes to the [4Fe-4S] cluster binding site. Residues 222-224 (HPE) and Thr239 each bind iminosuccinate. A [4Fe-4S] cluster-binding site is contributed by Cys282.

This sequence belongs to the quinolinate synthase family. Type 2 subfamily. The cofactor is [4Fe-4S] cluster.

The protein resides in the cytoplasm. It catalyses the reaction iminosuccinate + dihydroxyacetone phosphate = quinolinate + phosphate + 2 H2O + H(+). It functions in the pathway cofactor biosynthesis; NAD(+) biosynthesis; quinolinate from iminoaspartate: step 1/1. Its function is as follows. Catalyzes the condensation of iminoaspartate with dihydroxyacetone phosphate to form quinolinate. The protein is Quinolinate synthase 2 of Mesorhizobium japonicum (strain LMG 29417 / CECT 9101 / MAFF 303099) (Mesorhizobium loti (strain MAFF 303099)).